The following is a 909-amino-acid chain: E3 ubiquitin-protein ligase HACE1 (909 aa).

Positions 1–21 (MERAMEQLNRLTRSLRRARTV) are N-terminal helix important for homodimerization. ANK repeat units lie at residues 23 to 55 (LPED…NSKF), 64 to 93 (VKRS…NPNY), 97 to 126 (SGCT…DVNI), 130 to 159 (EGLT…DVDV), 163 to 192 (MGQT…DINR), 196 to 226 (SGAT…YLPD), and 228 to 253 (NGVT…QYHP). A disordered region spans residues 398–433 (QDQEAPSLSAFEPPGPGSYESLPPGPGDSKPEVLAG). One can recognise an HECT domain in the interval 574 to 909 (NCAKLKQGIA…HCGSYGYTMA (336 aa)). Cys-876 functions as the Glycyl thioester intermediate in the catalytic mechanism.

In terms of assembly, homodimer. The homodimer is autoinhibited and stabilized by its N-terminal helix. Interacts with RAB1 (RAB1A, RAB1B or RAB1C), RAB4 (RAB4A or RAB4B) and RAB11 (RAB11A or RAB11B); in a GTP-dependent manner. Interacts with the 26S proteasomal complex through the 20S core proteasomal subunit. Interacts with RARB. In terms of processing, autoubiquitinated.

It is found in the golgi apparatus. It localises to the golgi stack membrane. The protein resides in the cytoplasm. The protein localises to the endoplasmic reticulum. The enzyme catalyses S-ubiquitinyl-[E2 ubiquitin-conjugating enzyme]-L-cysteine + [acceptor protein]-L-lysine = [E2 ubiquitin-conjugating enzyme]-L-cysteine + N(6)-ubiquitinyl-[acceptor protein]-L-lysine.. It participates in protein modification; protein ubiquitination. Its activity is regulated as follows. Sterically autoinhibited in its dimeric state. Functionally, E3 ubiquitin-protein ligase involved in Golgi membrane fusion and regulation of small GTPases. Acts as a regulator of Golgi membrane dynamics during the cell cycle: recruited to Golgi membrane by Rab proteins and regulates postmitotic Golgi membrane fusion. Acts by mediating ubiquitination during mitotic Golgi disassembly, ubiquitination serving as a signal for Golgi reassembly later, after cell division. Specifically binds GTP-bound RAC1, mediating ubiquitination and subsequent degradation of active RAC1, thereby playing a role in host defense against pathogens. May also act as a transcription regulator via its interaction with RARB. This is E3 ubiquitin-protein ligase HACE1 (Hace1) from Mus musculus (Mouse).